Here is a 162-residue protein sequence, read N- to C-terminus: Shikimate kinase (162 aa).

11–16 provides a ligand contact to ATP; sequence GSGKSS. A Mg(2+)-binding site is contributed by Ser-15. Positions 33, 57, and 80 each coordinate substrate. Arg-116 contributes to the ATP binding site. Arg-132 serves as a coordination point for substrate.

Belongs to the shikimate kinase family. In terms of assembly, monomer. It depends on Mg(2+) as a cofactor.

The protein resides in the cytoplasm. The enzyme catalyses shikimate + ATP = 3-phosphoshikimate + ADP + H(+). Its pathway is metabolic intermediate biosynthesis; chorismate biosynthesis; chorismate from D-erythrose 4-phosphate and phosphoenolpyruvate: step 5/7. Functionally, catalyzes the specific phosphorylation of the 3-hydroxyl group of shikimic acid using ATP as a cosubstrate. The sequence is that of Shikimate kinase from Helicobacter acinonychis (strain Sheeba).